The sequence spans 370 residues: MSQIHTLTMPKWGLSMTEGRVDAWLKQEGDEINKGDEVLDVETDKISSSVEAPFSGVLRRQVAKPDETLPVGALLAVVVEGEAEESEIDAVVQRFQAEFVAEGGADQAQGPAPQKAEVGGRLLRWFELGGEGGTPLVLVHGFGGDLNNWLFNHPALAAERRVIALDLPGHGESAKALQRGDLDELSETVLALLDHLDIAKAHLAGHSMGGAVSLNVAGLAPQRVASLSLIASAGLGEAINGQYLQGFVAAANRNALKPQMVQLFADPALVTRQMLEDMLKFKRLEGVDEALRQLALAIADGDRQRHDLRSVLGQHPALVVWGGKDAIIPASHARKGPEAEVLVLPEAGHMVQMEAAEQVNQQMLAFLRKH.

The Lipoyl-binding domain occupies 4-79 (IHTLTMPKWG…PVGALLAVVV (76 aa)). The residue at position 45 (Lys-45) is an N6-lipoyllysine. The region spanning 135–355 (PLVLVHGFGG…EAGHMVQMEA (221 aa)) is the AB hydrolase-1 domain.

The cofactor is (R)-lipoate.

The catalysed reaction is N(6)-[(R)-dihydrolipoyl]-L-lysyl-[protein] + acetyl-CoA = N(6)-[(R)-S(8)-acetyldihydrolipoyl]-L-lysyl-[protein] + CoA. The protein operates within ketone degradation; acetoin degradation. The sequence is that of Dihydrolipoyllysine-residue acetyltransferase component of acetoin cleaving system (acoC) from Pseudomonas putida (Arthrobacter siderocapsulatus).